The following is a 380-amino-acid chain: Small ribosomal subunit protein uS3m (380 aa).

It belongs to the universal ribosomal protein uS3 family.

It is found in the mitochondrion. Functionally, essential for mitochondrial protein synthesis and required for the maturation of small ribosomal subunits. The polypeptide is Small ribosomal subunit protein uS3m (VAR1) (Cyberlindnera mrakii (Yeast)).